The chain runs to 607 residues: Discoidin-inducing complex subunit B (607 aa).

Positions 1 to 19 are cleaved as a signal peptide; the sequence is MNKKIIILIYLIFIKSIVG. Residues 20-554 lie on the Extracellular side of the membrane; the sequence is QNPVWIGGSG…LGTDGISKGS (535 aa). Residues asparagine 75, asparagine 161, asparagine 215, asparagine 276, asparagine 277, asparagine 307, asparagine 324, asparagine 453, asparagine 477, and asparagine 527 are each glycosylated (N-linked (GlcNAc...) asparagine). A helical transmembrane segment spans residues 555 to 575; it reads LAGISVSMVALACFVSLGVWW. Residues 576-607 lie on the Cytoplasmic side of the membrane; it reads KTSKKNDQRNDSQVLTNFSQNKSDDIDVERKL.

Forms a complex with psiF/dicA.

Its subcellular location is the membrane. It is found in the secreted. Its function is as follows. Component of a complex that acts as a quorum sensing protein regulating discoidin gene expression during growth and development. Its function in the complex is unclear as it has no ability to induce discoidin during growth and development by itself. This Dictyostelium discoideum (Social amoeba) protein is Discoidin-inducing complex subunit B (dicB).